The sequence spans 198 residues: Nucleoid occlusion factor SlmA (198 aa).

In terms of domain architecture, HTH tetR-type spans 10-70 (NRREEILQSL…SLIEFIEDSL (61 aa)). Positions 33-52 (TTAKLAASVGVSEAALYRHF) form a DNA-binding region, H-T-H motif. Positions 117–144 (EQDRLQGRINQLFERIEAQLRQVLREKR) form a coiled coil.

The protein belongs to the nucleoid occlusion factor SlmA family. As to quaternary structure, homodimer. Interacts with FtsZ.

It localises to the cytoplasm. It is found in the nucleoid. Required for nucleoid occlusion (NO) phenomenon, which prevents Z-ring formation and cell division over the nucleoid. Acts as a DNA-associated cell division inhibitor that binds simultaneously chromosomal DNA and FtsZ, and disrupts the assembly of FtsZ polymers. SlmA-DNA-binding sequences (SBS) are dispersed on non-Ter regions of the chromosome, preventing FtsZ polymerization at these regions. The sequence is that of Nucleoid occlusion factor SlmA from Citrobacter koseri (strain ATCC BAA-895 / CDC 4225-83 / SGSC4696).